Here is a 154-residue protein sequence, read N- to C-terminus: Xanthine-guanine phosphoribosyltransferase (154 aa).

5-phospho-alpha-D-ribose 1-diphosphate-binding positions include 37–38 (RG) and 90–98 (DDLVDTGNT). Asp91 provides a ligand contact to Mg(2+). Residues Asp94 and Ile137 each contribute to the guanine site. Xanthine is bound by residues Asp94 and Ile137. Residues 94–98 (DTGNT) and 136–137 (WI) each bind GMP.

This sequence belongs to the purine/pyrimidine phosphoribosyltransferase family. XGPT subfamily. As to quaternary structure, homotetramer. Mg(2+) is required as a cofactor.

The protein resides in the cell inner membrane. It catalyses the reaction GMP + diphosphate = guanine + 5-phospho-alpha-D-ribose 1-diphosphate. The catalysed reaction is XMP + diphosphate = xanthine + 5-phospho-alpha-D-ribose 1-diphosphate. The enzyme catalyses IMP + diphosphate = hypoxanthine + 5-phospho-alpha-D-ribose 1-diphosphate. It participates in purine metabolism; GMP biosynthesis via salvage pathway; GMP from guanine: step 1/1. It functions in the pathway purine metabolism; XMP biosynthesis via salvage pathway; XMP from xanthine: step 1/1. Its function is as follows. Purine salvage pathway enzyme that catalyzes the transfer of the ribosyl-5-phosphate group from 5-phospho-alpha-D-ribose 1-diphosphate (PRPP) to the N9 position of the 6-oxopurines guanine and xanthine to form the corresponding ribonucleotides GMP (guanosine 5'-monophosphate) and XMP (xanthosine 5'-monophosphate), with the release of PPi. To a lesser extent, also acts on hypoxanthine. In Histophilus somni (strain 129Pt) (Haemophilus somnus), this protein is Xanthine-guanine phosphoribosyltransferase.